A 309-amino-acid polypeptide reads, in one-letter code: tRNA dimethylallyltransferase (309 aa).

15–22 serves as a coordination point for ATP; it reads GPTASGKS. A substrate-binding site is contributed by 17–22; the sequence is TASGKS. The tract at residues 40–43 is interaction with substrate tRNA; sequence DSRQ.

The protein belongs to the IPP transferase family. Monomer. Mg(2+) serves as cofactor.

It carries out the reaction adenosine(37) in tRNA + dimethylallyl diphosphate = N(6)-dimethylallyladenosine(37) in tRNA + diphosphate. In terms of biological role, catalyzes the transfer of a dimethylallyl group onto the adenine at position 37 in tRNAs that read codons beginning with uridine, leading to the formation of N6-(dimethylallyl)adenosine (i(6)A). This chain is tRNA dimethylallyltransferase, found in Chlorobium phaeovibrioides (strain DSM 265 / 1930) (Prosthecochloris vibrioformis (strain DSM 265)).